Here is a 152-residue protein sequence, read N- to C-terminus: Nucleoside diphosphate kinase (152 aa).

Residues lysine 11, phenylalanine 59, arginine 87, threonine 93, arginine 104, and asparagine 114 each contribute to the ATP site. The Pros-phosphohistidine intermediate role is filled by histidine 117.

It belongs to the NDK family. Homotetramer. Mg(2+) serves as cofactor.

It localises to the cytoplasm. The catalysed reaction is a 2'-deoxyribonucleoside 5'-diphosphate + ATP = a 2'-deoxyribonucleoside 5'-triphosphate + ADP. The enzyme catalyses a ribonucleoside 5'-diphosphate + ATP = a ribonucleoside 5'-triphosphate + ADP. In terms of biological role, major role in the synthesis of nucleoside triphosphates other than ATP. The ATP gamma phosphate is transferred to the NDP beta phosphate via a ping-pong mechanism, using a phosphorylated active-site intermediate. In Prochlorococcus marinus (strain MIT 9515), this protein is Nucleoside diphosphate kinase.